Here is a 227-residue protein sequence, read N- to C-terminus: Ribonuclease 3 (227 aa).

Positions 4–133 constitute an RNase III domain; sequence FEKLEKLLSY…LIAAIYLDSN (130 aa). E46 contacts Mg(2+). The active site involves D50. Residues N119 and E122 each coordinate Mg(2+). Residue E122 is part of the active site. One can recognise a DRBM domain in the interval 158-226; it reads DPKTALQEWA…ARSLLHRLKN (69 aa).

Belongs to the ribonuclease III family. In terms of assembly, homodimer. Requires Mg(2+) as cofactor.

It localises to the cytoplasm. It carries out the reaction Endonucleolytic cleavage to 5'-phosphomonoester.. Its function is as follows. Digests double-stranded RNA. Involved in the processing of primary rRNA transcript to yield the immediate precursors to the large and small rRNAs (23S and 16S). Processes some mRNAs, and tRNAs when they are encoded in the rRNA operon. Processes pre-crRNA and tracrRNA of type II CRISPR loci if present in the organism. This is Ribonuclease 3 from Rickettsia africae (strain ESF-5).